We begin with the raw amino-acid sequence, 939 residues long: MAPVRGDGMRGLAVFISDIRNCKSKEAEVKRINKELANIRSKFKGDKTLDGYQKKKYVCKLLFIFLLGHDIDFGHMEAVNLLSSNKYSEKQIGYLFISVLVNTNSDLIRLIIQSIKNDLQSRNPVHVNLALQCIANIGSRDMAESFSNEIPKLLVSGDTMDVVKQSAALCLLRLFRSSPDIIPGGEWTSRIIHLLNDQHMGVVTAATSLIDALVKCNPDEYKGCVNLAVSRLSRIVTASYTDLQDYTYYFVPAPWLSVKLLRLLQNYNPVTEEAGVRARLNETLETILNKAQEPPKSKKVQHSNAKNAVLFEAINLIIHSDSEPNLLVRACNQLGQFLSNRETNLRYLALESMCHLATSEFSHEEVKKHQEVVILSMKMEKDVSVRQMAVDLLYAMCDRGNAEEIVQEMLNYLETADYSIREEMVLKVAILAEKYATDYTWYVDVILNLIRIAGDYVSEEVWYRVIQIVINREEVQGYAAKTVFEALQAPACHENMVKVGGYILGEFGNLIAGDSRSAPLVQFKLLHSKYHLCSPMTRALLLSTYIKFINLFPEIRTNIQDVFRQHSNLRSADAELQQRASEYLQLSIVASTDVLATVLEEMPSFPERESSILAVLKKKKPGRVPENEIRESKSPAPTSGPGSVLQNNVHVNNSHSKLNNSNANTDLLGLSTPPANNVGSNSNSTLIDVLGDIYGSNNNSSAVYNTKKFLFKNNGVLFENEMLQIGVKSEFRQNLGRLGLFYGNKTQVPLSNFNPVLQWSAEETLKLNVQMKAVEPTLEAGAQIQQLLTAECIEDYADAPTIEISFRYNGTQQKFSIKLPLSVNKFFEPTEMNAESFFARWKNLSGEQQRSQKVFKAAQPLDLPGARNKLMGFGMQLLDSVDPNPDNMVCAGIIHTQSQQVGCLMRLEPNKQAQMFRLTVRASKETVTREICDLLADQF.

Positions 623-633 (RVPENEIRESK) are enriched in basic and acidic residues. The disordered stretch occupies residues 623-660 (RVPENEIRESKSPAPTSGPGSVLQNNVHVNNSHSKLNN). The segment covering 635-660 (PAPTSGPGSVLQNNVHVNNSHSKLNN) has biased composition (polar residues).

The protein belongs to the adapter complexes large subunit family. As to quaternary structure, adaptor protein complex 2 (AP-2) is a heterotetramer composed of two large adaptins (alpha-type and beta-type subunits), a medium adaptin (mu-type subunit AP50) and a small adaptin (sigma-type subunit AP17).

It localises to the cell membrane. The protein resides in the membrane. It is found in the coated pit. Its function is as follows. Adaptins are components of the adapter complexes which link clathrin to receptors in coated vesicles. Clathrin-associated protein complexes are believed to interact with the cytoplasmic tails of membrane proteins, leading to their selection and concentration. Alpha adaptin is a subunit of the plasma membrane adapter. The sequence is that of AP-2 complex subunit alpha from Drosophila pseudoobscura pseudoobscura (Fruit fly).